The chain runs to 224 residues: MASPSICLLAALLALVSWQAIASDPSPLQDFCVADMHSPVLVNGFACLDPKYVNADHFFKAAMLDTPRKTNKVGSNVTLINVMQIPGLNTLGISIARIDYAPLGENPPHTHPRATEILTVLEGTLYVGFVTSNPNNTLFSKVLNKGDVFVFPEGLIHFQFNPNPHQPAVAIAALSSQNPGAITIANAVFGSKPPISDIVLAKAFQVEKGTIDWLQAQFWENNHY.

A signal peptide spans 1–22 (MASPSICLLAALLALVSWQAIA). C32 and C47 form a disulfide bridge. The 151-residue stretch at 62-212 (AMLDTPRKTN…AFQVEKGTID (151 aa)) folds into the Cupin type-1 domain. The N-linked (GlcNAc...) asparagine glycan is linked to N76. Mn(2+) contacts are provided by H109, H111, and E116. A glycan (N-linked (GlcNAc...) asparagine) is linked at N135. Residue H157 coordinates Mn(2+).

The protein belongs to the germin family. In terms of assembly, oligomer (believed to be a pentamer but probably hexamer).

The protein resides in the secreted. The protein localises to the extracellular space. Its subcellular location is the apoplast. Functionally, plays a role in broad-spectrum disease resistance. Probably has no oxalate oxidase activity even if the active site is conserved. The sequence is that of Germin-like protein 8-10 (GLP2) from Oryza sativa subsp. japonica (Rice).